The primary structure comprises 739 residues: Endoglucanase F (739 aa).

Residues 1–27 (MKKILAFLLTVALVAVVAIPQAVVSFA) form the signal peptide. Positions 28–470 (ADFNYGEALQ…AKMYEKYGGE (443 aa)) are catalytic. Asp84 functions as the Nucleophile in the catalytic mechanism. Active-site residues include His400, Asp438, and Glu447. Positions 480–639 (TPGEEFYVEA…NVRVWGKVPD (160 aa)) constitute a CBM3 domain. Positions 664 to 737 (PGIMLGDVNF…ILKLIEKFPA (74 aa)) constitute a Dockerin domain.

Belongs to the glycosyl hydrolase 9 (cellulase E) family. Requires Ca(2+) as cofactor.

It carries out the reaction Endohydrolysis of (1-&gt;4)-beta-D-glucosidic linkages in cellulose, lichenin and cereal beta-D-glucans.. This enzyme catalyzes the endohydrolysis of 1,4-beta-glucosidic linkages in cellulose, lichenin and cereal beta-D-glucans. This chain is Endoglucanase F (celF), found in Acetivibrio thermocellus (strain ATCC 27405 / DSM 1237 / JCM 9322 / NBRC 103400 / NCIMB 10682 / NRRL B-4536 / VPI 7372) (Clostridium thermocellum).